The primary structure comprises 150 residues: MKIRRQKKILELVEQKVIRTQEELAEALKEAGFDVTQATVSRDIKELGLVKIPFQKDSYRYALPQKTVSAASIERLKRLFADAVSSYDQSENLIVIKTLPGAAQGVASAIDQVAFPEILGTIAGDDTILIIARDREQVPKILARFDEFLT.

Belongs to the ArgR family.

The protein resides in the cytoplasm. The protein operates within amino-acid biosynthesis; L-arginine biosynthesis [regulation]. Functionally, regulates arginine biosynthesis genes. This is Arginine repressor from Carboxydothermus hydrogenoformans (strain ATCC BAA-161 / DSM 6008 / Z-2901).